We begin with the raw amino-acid sequence, 478 residues long: Light-independent protochlorophyllide reductase subunit N (478 aa).

The [4Fe-4S] cluster site is built by Cys22, Cys47, and Cys107.

It belongs to the BchN/ChlN family. In terms of assembly, protochlorophyllide reductase is composed of three subunits; ChlL, ChlN and ChlB. Forms a heterotetramer of two ChlB and two ChlN subunits. It depends on [4Fe-4S] cluster as a cofactor.

It localises to the plastid. The protein resides in the chloroplast. It catalyses the reaction chlorophyllide a + oxidized 2[4Fe-4S]-[ferredoxin] + 2 ADP + 2 phosphate = protochlorophyllide a + reduced 2[4Fe-4S]-[ferredoxin] + 2 ATP + 2 H2O. It participates in porphyrin-containing compound metabolism; chlorophyll biosynthesis (light-independent). Functionally, component of the dark-operative protochlorophyllide reductase (DPOR) that uses Mg-ATP and reduced ferredoxin to reduce ring D of protochlorophyllide (Pchlide) to form chlorophyllide a (Chlide). This reaction is light-independent. The NB-protein (ChlN-ChlB) is the catalytic component of the complex. In Chlorokybus atmophyticus (Soil alga), this protein is Light-independent protochlorophyllide reductase subunit N.